A 204-amino-acid chain; its full sequence is bMERB domain-containing protein 1 (204 aa).

In terms of domain architecture, bMERB spans 3-150; it reads LKQSLSTHLE…EQEEDKEMAD (148 aa). Positions 162 to 187 are disordered; the sequence is VTKSPASSRAEKKAEPPPSKPTVAKT.

The protein is bMERB domain-containing protein 1 of Homo sapiens (Human).